The sequence spans 411 residues: LL-diaminopimelate aminotransferase (411 aa).

Substrate is bound by residues tyrosine 15 and glycine 42. Residues tyrosine 72, 105–106 (SK), tyrosine 129, asparagine 186, tyrosine 217, and 245–247 (SFS) contribute to the pyridoxal 5'-phosphate site. Positions 106, 129, and 186 each coordinate substrate. N6-(pyridoxal phosphate)lysine is present on lysine 248. Arginine 256 and asparagine 287 together coordinate pyridoxal 5'-phosphate. Residues asparagine 287 and arginine 382 each coordinate substrate.

The protein belongs to the class-I pyridoxal-phosphate-dependent aminotransferase family. LL-diaminopimelate aminotransferase subfamily. In terms of assembly, homodimer. Requires pyridoxal 5'-phosphate as cofactor.

It catalyses the reaction (2S,6S)-2,6-diaminopimelate + 2-oxoglutarate = (S)-2,3,4,5-tetrahydrodipicolinate + L-glutamate + H2O + H(+). Its pathway is amino-acid biosynthesis; L-lysine biosynthesis via DAP pathway; LL-2,6-diaminopimelate from (S)-tetrahydrodipicolinate (aminotransferase route): step 1/1. Its function is as follows. Involved in the synthesis of meso-diaminopimelate (m-DAP or DL-DAP), required for both lysine and peptidoglycan biosynthesis. Catalyzes the direct conversion of tetrahydrodipicolinate to LL-diaminopimelate. Is also able to use meso-diaminopimelate, lysine or ornithine as substrates. This Protochlamydia amoebophila (strain UWE25) protein is LL-diaminopimelate aminotransferase.